A 426-amino-acid chain; its full sequence is Chaperone SurA (426 aa).

The signal sequence occupies residues methionine 1 to alanine 19. 2 PpiC domains span residues aspartate 169–aspartate 270 and valine 280–aspartate 379.

The protein resides in the periplasm. It carries out the reaction [protein]-peptidylproline (omega=180) = [protein]-peptidylproline (omega=0). Chaperone involved in the correct folding and assembly of outer membrane proteins. Recognizes specific patterns of aromatic residues and the orientation of their side chains, which are found more frequently in integral outer membrane proteins. May act in both early periplasmic and late outer membrane-associated steps of protein maturation. This chain is Chaperone SurA, found in Nitrosococcus oceani (strain ATCC 19707 / BCRC 17464 / JCM 30415 / NCIMB 11848 / C-107).